The following is a 308-amino-acid chain: UPF0026 protein HP_0117 (308 aa).

A Radical SAM core domain is found at 18-248 (FGKSLGVDLS…SLPKRSITQA (231 aa)). Residues Cys33, Cys37, and Cys40 each contribute to the [4Fe-4S] cluster site.

It belongs to the UPF0026 family. [4Fe-4S] cluster serves as cofactor.

The polypeptide is UPF0026 protein HP_0117 (Helicobacter pylori (strain ATCC 700392 / 26695) (Campylobacter pylori)).